The primary structure comprises 229 residues: Putative ankyrin repeat protein L148 (229 aa).

4 ANK repeats span residues 70–95 (ILDY…PDNY), 96–126 (IGTE…DLRI), 127–156 (NNDY…NCQA), and 157–186 (YNNA…SVAA).

The protein is Putative ankyrin repeat protein L148 of Acanthamoeba polyphaga (Amoeba).